The chain runs to 305 residues: Dihydroorotate dehydrogenase A (fumarate) (305 aa).

FMN is bound by residues serine 21 and lysine 45–serine 46. Residues lysine 45, asparagine 69 to leucine 73, and asparagine 129 each bind substrate. Position 129 (asparagine 129) interacts with FMN. Residue cysteine 132 is the Nucleophile of the active site. FMN is bound by residues lysine 167 and isoleucine 193. Residue asparagine 194–threonine 195 coordinates substrate. FMN-binding positions include glycine 219 and glycine 245 to glycine 246.

This sequence belongs to the dihydroorotate dehydrogenase family. Type 1 subfamily. As to quaternary structure, homodimer. It depends on FMN as a cofactor.

It localises to the cytoplasm. It catalyses the reaction (S)-dihydroorotate + fumarate = orotate + succinate. The protein operates within pyrimidine metabolism; UMP biosynthesis via de novo pathway. Catalyzes the conversion of dihydroorotate to orotate with fumarate as the electron acceptor. This chain is Dihydroorotate dehydrogenase A (fumarate) (pyrD), found in Lactiplantibacillus plantarum (strain ATCC BAA-793 / NCIMB 8826 / WCFS1) (Lactobacillus plantarum).